Reading from the N-terminus, the 414-residue chain is Cytosolic-abundant heat soluble protein 89226 (414 aa).

2 stretches are compositionally biased toward basic and acidic residues: residues 27-45 (IGEDRGKEDPGMNFQDKRP) and 69-84 (AGQRLREHLSESERLR). The tract at residues 27-155 (IGEDRGKEDP…SNPGMNNGMT (129 aa)) is disordered. Low complexity-rich tracts occupy residues 86–101 (SRSSTSSKSSSFVEPS) and 120–134 (SSNRQNSSSNVSSSD). The span at 142–155 (ASRNSNPGMNNGMT) shows a compositional bias: polar residues. CAHS motif regions lie at residues 305 to 323 (YRNAVEADAELIRQTLERQ) and 342 to 360 (QQQEIRLEAEYAMRALEQE). A coiled-coil region spans residues 341-376 (RQQQEIRLEAEYAMRALEQERVNARAALDQAMASTN). Residues 388 to 405 (THSQGRVTTTSESRTSQA) are compositionally biased toward polar residues. The segment at 388–414 (THSQGRVTTTSESRTSQARGPATAAVI) is disordered.

It belongs to the Cytosolic-abundant heat soluble protein (CAHS) family.

The protein localises to the cytoplasm. Its function is as follows. CAHS proteins are cytosolic heat soluble proteins that seem to contribute to the anhydrobiosis in tardigrades, but their specific mechanisms are yet to be identified. It is possible that protection during anhydrobiosis might occur via the stabilization of vitrifying small molecules such as sugars, but not via the direct glass transition of CAHS proteins themselves. The protein is Cytosolic-abundant heat soluble protein 89226 of Hypsibius exemplaris (Freshwater tardigrade).